A 353-amino-acid polypeptide reads, in one-letter code: Putative permease PerM (353 aa).

7 helical membrane passes run 19-39, 72-92, 156-176, 217-237, 240-260, 281-301, and 310-330; these read IALLVILVAGFGIIFFFSGLL, IVLVVFVGILLLMAFVVLPIA, LVGLLTIAVYLVLVPLMVFFL, VLEMIVVGIATWLGFLLFGLN, LLLAVLVGFSVLIPYIGAFVV, CFAVYLIIQALDGNLLVPVLF, and LVIILSVVIFGGLWGFWGVFF.

Belongs to the autoinducer-2 exporter (AI-2E) (TC 2.A.86) family.

The protein resides in the cell membrane. The protein is Putative permease PerM (perM) of Escherichia coli O157:H7.